A 247-amino-acid polypeptide reads, in one-letter code: Aspartate/glutamate leucyltransferase (247 aa).

The protein belongs to the R-transferase family. Bpt subfamily.

Its subcellular location is the cytoplasm. The catalysed reaction is N-terminal L-glutamyl-[protein] + L-leucyl-tRNA(Leu) = N-terminal L-leucyl-L-glutamyl-[protein] + tRNA(Leu) + H(+). The enzyme catalyses N-terminal L-aspartyl-[protein] + L-leucyl-tRNA(Leu) = N-terminal L-leucyl-L-aspartyl-[protein] + tRNA(Leu) + H(+). Functionally, functions in the N-end rule pathway of protein degradation where it conjugates Leu from its aminoacyl-tRNA to the N-termini of proteins containing an N-terminal aspartate or glutamate. This is Aspartate/glutamate leucyltransferase from Dechloromonas aromatica (strain RCB).